Here is a 376-residue protein sequence, read N- to C-terminus: Formate dehydrogenase 1 (376 aa).

Substrate is bound by residues valine 97 and asparagine 121. NAD(+)-binding positions include 176-177 (RI), aspartate 197, 244-248 (PLHKD), threonine 270, aspartate 296, and 325-328 (HISG).

The protein belongs to the D-isomer specific 2-hydroxyacid dehydrogenase family. FDH subfamily. In terms of assembly, homodimer.

It is found in the cytoplasm. It carries out the reaction formate + NAD(+) = CO2 + NADH. Catalyzes the NAD(+)-dependent oxidation of formate to carbon dioxide. Formate oxidation is the final step in the methanol oxidation pathway in methylotrophic microorganisms. Has a role in the detoxification of exogenous formate in non-methylotrophic organisms. This Saccharomyces cerevisiae (strain YJM789) (Baker's yeast) protein is Formate dehydrogenase 1 (FDH1).